The chain runs to 186 residues: Peptidyl-tRNA hydrolase (186 aa).

Tyr14 serves as a coordination point for tRNA. His19 serves as the catalytic Proton acceptor. TRNA is bound by residues Tyr64, Asn66, and Asn112.

Belongs to the PTH family. Monomer.

The protein localises to the cytoplasm. The catalysed reaction is an N-acyl-L-alpha-aminoacyl-tRNA + H2O = an N-acyl-L-amino acid + a tRNA + H(+). Functionally, hydrolyzes ribosome-free peptidyl-tRNAs (with 1 or more amino acids incorporated), which drop off the ribosome during protein synthesis, or as a result of ribosome stalling. Catalyzes the release of premature peptidyl moieties from peptidyl-tRNA molecules trapped in stalled 50S ribosomal subunits, and thus maintains levels of free tRNAs and 50S ribosomes. The chain is Peptidyl-tRNA hydrolase from Lachnospira eligens (strain ATCC 27750 / DSM 3376 / VPI C15-48 / C15-B4) (Eubacterium eligens).